Here is a 642-residue protein sequence, read N- to C-terminus: uncharacterized protein (642 aa).

The Cytoplasmic portion of the chain corresponds to 1 to 15 (MVHITLGQAIWVSVK). The helical transmembrane segment at 16-36 (PIIKIYLIIGVGFLMAKMGIL) threads the bilayer. The Extracellular portion of the chain corresponds to 37–42 (TVEATR). A helical transmembrane segment spans residues 43–63 (IISDIVLTVLLPSLSFNKIVA). Residues 64–73 (NIEDKDIKSV) are Cytoplasmic-facing. A helical membrane pass occupies residues 74 to 94 (GIICLSALLIFGSGFFFAYVV). Residues 95 to 104 (RLFLPVPKQW) lie on the Extracellular side of the membrane. A helical membrane pass occupies residues 105-125 (YGGILAGGMFPNISDLPIAYL). Residues 126–142 (QSMDQGLVFSEEEGNKG) are Cytoplasmic-facing. The chain crosses the membrane as a helical span at residues 143-163 (VANVIIFLTMFLICIFNLGGF). Residues 164 to 460 (RLIESDFEYN…FLKNCLRPCS (297 aa)) are Extracellular-facing. Disordered regions lie at residues 183 to 206 (ETTK…RFFS) and 227 to 324 (GTKG…SQPR). 2 stretches are compositionally biased toward polar residues: residues 240 to 260 (RRST…NSKI) and 272 to 312 (IACT…SSID). A helical membrane pass occupies residues 461–481 (MAVIIALTVAFIPWVKALFVT). At 482-499 (TANTPHISQAPDNAPPLS) the chain is on the cytoplasmic side. Residues 500–520 (FFMDFTGYVGAACVPFGLILL) traverse the membrane as a helical segment. At 521-538 (GATLGRLKIGNLYPGFWK) the chain is on the extracellular side. The helical transmembrane segment at 539–559 (AAVTLVILRQCVMPIFGVLWC) threads the bilayer. Residues 560–574 (DRLVKAGWVNWQDDR) lie on the Cytoplasmic side of the membrane. The helical transmembrane segment at 575–595 (MLLFVIAISWNLPTMTTLIYF) threads the bilayer. The Extracellular portion of the chain corresponds to 596–614 (TASFTPPETTAPIQMECVS). Residues 615 to 635 (FFLMLQYPLMVVSLPFLVSYF) traverse the membrane as a helical segment. Over 636-642 (LKVQMNL) the chain is Cytoplasmic.

The protein belongs to the auxin efflux carrier (TC 2.A.69) family.

Its subcellular location is the membrane. This is an uncharacterized protein from Saccharomyces cerevisiae (strain ATCC 204508 / S288c) (Baker's yeast).